The following is a 244-amino-acid chain: Adenosylcobinamide-GDP ribazoletransferase (244 aa).

The next 5 helical transmembrane spans lie at 33 to 53, 57 to 77, 109 to 129, 132 to 152, and 176 to 196; these read WFAV…WLGA, PWLA…GLHL, FAVI…MLAV, GVGW…AVWW, and FWLS…VLLL.

The protein belongs to the CobS family. The cofactor is Mg(2+).

The protein localises to the cell inner membrane. It catalyses the reaction alpha-ribazole + adenosylcob(III)inamide-GDP = adenosylcob(III)alamin + GMP + H(+). It carries out the reaction alpha-ribazole 5'-phosphate + adenosylcob(III)inamide-GDP = adenosylcob(III)alamin 5'-phosphate + GMP + H(+). It participates in cofactor biosynthesis; adenosylcobalamin biosynthesis; adenosylcobalamin from cob(II)yrinate a,c-diamide: step 7/7. Joins adenosylcobinamide-GDP and alpha-ribazole to generate adenosylcobalamin (Ado-cobalamin). Also synthesizes adenosylcobalamin 5'-phosphate from adenosylcobinamide-GDP and alpha-ribazole 5'-phosphate. In Laribacter hongkongensis (strain HLHK9), this protein is Adenosylcobinamide-GDP ribazoletransferase.